Consider the following 350-residue polypeptide: Probable 2-dehydropantoate 2-reductase (350 aa).

NADP(+) is bound by residues 9 to 14 and Asn-115; that span reads GAGSIG. Asn-115 serves as a coordination point for substrate. Lys-213 acts as the Proton donor in catalysis. Positions 217, 221, and 295 each coordinate substrate. Glu-307 serves as a coordination point for NADP(+).

Belongs to the ketopantoate reductase family.

The catalysed reaction is (R)-pantoate + NADP(+) = 2-dehydropantoate + NADPH + H(+). It functions in the pathway cofactor biosynthesis; (R)-pantothenate biosynthesis; (R)-pantoate from 3-methyl-2-oxobutanoate: step 2/2. Functionally, catalyzes the NADPH-dependent reduction of ketopantoate into pantoic acid. This Schizosaccharomyces pombe (strain 972 / ATCC 24843) (Fission yeast) protein is Probable 2-dehydropantoate 2-reductase.